The primary structure comprises 319 residues: Acetyl-coenzyme A carboxylase carboxyl transferase subunit alpha (319 aa).

A CoA carboxyltransferase C-terminal domain is found at 32-293; the sequence is NVDIEVRALE…KAVLLNELEA (262 aa).

This sequence belongs to the AccA family. Acetyl-CoA carboxylase is a heterohexamer composed of biotin carboxyl carrier protein (AccB), biotin carboxylase (AccC) and two subunits each of ACCase subunit alpha (AccA) and ACCase subunit beta (AccD).

The protein localises to the cytoplasm. The catalysed reaction is N(6)-carboxybiotinyl-L-lysyl-[protein] + acetyl-CoA = N(6)-biotinyl-L-lysyl-[protein] + malonyl-CoA. The protein operates within lipid metabolism; malonyl-CoA biosynthesis; malonyl-CoA from acetyl-CoA: step 1/1. Functionally, component of the acetyl coenzyme A carboxylase (ACC) complex. First, biotin carboxylase catalyzes the carboxylation of biotin on its carrier protein (BCCP) and then the CO(2) group is transferred by the carboxyltransferase to acetyl-CoA to form malonyl-CoA. The chain is Acetyl-coenzyme A carboxylase carboxyl transferase subunit alpha from Xylella fastidiosa (strain Temecula1 / ATCC 700964).